A 346-amino-acid polypeptide reads, in one-letter code: DNA polymerase IV 2 (346 aa).

Residues 9–191 (ILHVDLDQFL…RTVEALWGVG (183 aa)) form the UmuC domain. Mg(2+) is bound by residues Asp13 and Asp111. Residue Glu112 is part of the active site.

This sequence belongs to the DNA polymerase type-Y family. As to quaternary structure, monomer. Mg(2+) serves as cofactor.

It localises to the cytoplasm. The catalysed reaction is DNA(n) + a 2'-deoxyribonucleoside 5'-triphosphate = DNA(n+1) + diphosphate. In terms of biological role, poorly processive, error-prone DNA polymerase involved in untargeted mutagenesis. Copies undamaged DNA at stalled replication forks, which arise in vivo from mismatched or misaligned primer ends. These misaligned primers can be extended by PolIV. Exhibits no 3'-5' exonuclease (proofreading) activity. May be involved in translesional synthesis, in conjunction with the beta clamp from PolIII. The protein is DNA polymerase IV 2 (dinB2) of Mycobacterium bovis (strain ATCC BAA-935 / AF2122/97).